We begin with the raw amino-acid sequence, 140 residues long: uncharacterized protein (140 aa).

Residues 80–115 are disordered; it reads KNGTRRHALPSPLEGSFQPGRQIPPPQTPSTDPQTL.

This is an uncharacterized protein from Homo sapiens (Human).